Here is a 438-residue protein sequence, read N- to C-terminus: UDP-N-acetylmuramoylalanine--D-glutamate ligase (438 aa).

112–118 (GSNGKST) is an ATP binding site.

This sequence belongs to the MurCDEF family.

It is found in the cytoplasm. It catalyses the reaction UDP-N-acetyl-alpha-D-muramoyl-L-alanine + D-glutamate + ATP = UDP-N-acetyl-alpha-D-muramoyl-L-alanyl-D-glutamate + ADP + phosphate + H(+). It functions in the pathway cell wall biogenesis; peptidoglycan biosynthesis. Functionally, cell wall formation. Catalyzes the addition of glutamate to the nucleotide precursor UDP-N-acetylmuramoyl-L-alanine (UMA). This is UDP-N-acetylmuramoylalanine--D-glutamate ligase from Salmonella choleraesuis (strain SC-B67).